Here is a 308-residue protein sequence, read N- to C-terminus: Carbamate kinase (308 aa).

The protein belongs to the carbamate kinase family.

The protein resides in the cytoplasm. The enzyme catalyses hydrogencarbonate + NH4(+) + ATP = carbamoyl phosphate + ADP + H2O + H(+). This Synechocystis sp. (strain ATCC 27184 / PCC 6803 / Kazusa) protein is Carbamate kinase.